Reading from the N-terminus, the 193-residue chain is Large ribosomal subunit protein uL5 (193 aa).

This sequence belongs to the universal ribosomal protein uL5 family. In terms of assembly, part of the 50S ribosomal subunit; part of the 5S rRNA/L5/L18/L25 subcomplex. Contacts the 5S rRNA and the P site tRNA. Forms a bridge to the 30S subunit in the 70S ribosome.

Functionally, this is one of the proteins that bind and probably mediate the attachment of the 5S RNA into the large ribosomal subunit, where it forms part of the central protuberance. In the 70S ribosome it contacts protein S13 of the 30S subunit (bridge B1b), connecting the 2 subunits; this bridge is implicated in subunit movement. Contacts the P site tRNA; the 5S rRNA and some of its associated proteins might help stabilize positioning of ribosome-bound tRNAs. In Pseudarthrobacter chlorophenolicus (strain ATCC 700700 / DSM 12829 / CIP 107037 / JCM 12360 / KCTC 9906 / NCIMB 13794 / A6) (Arthrobacter chlorophenolicus), this protein is Large ribosomal subunit protein uL5.